Consider the following 69-residue polypeptide: Light-harvesting polypeptide B-800/860 alpha chain (69 aa).

Residues 1–14 (MTNGKIWLVVKPTV) are Cytoplasmic-facing. A helical transmembrane segment spans residues 15–35 (GLPIGMLFAALLAVLIHGLLF). His-31 serves as a coordination point for a bacteriochlorophyll. At 36-69 (VDGRLKSWWSEFPVAKPAVVSVQAAPAPVAAEVK) the chain is on the periplasmic side.

Belongs to the antenna complex alpha subunit family. As to quaternary structure, the core complex is formed by different alpha and beta chains, binding bacteriochlorophyll molecules, and arranged most probably in tetrameric structures disposed around the reaction center. The non-pigmented gamma chains may constitute additional components.

It localises to the cell inner membrane. Antenna complexes are light-harvesting systems, which transfer the excitation energy to the reaction centers. This chain is Light-harvesting polypeptide B-800/860 alpha chain, found in Rhodocyclus tenuis (Rhodospirillum tenue).